The primary structure comprises 454 residues: Na(+)/H(+) antiporter NhaA (454 aa).

10 consecutive transmembrane segments (helical) span residues 22 to 42 (ISGL…NLPF), 64 to 84 (MGLG…TVGL), 106 to 126 (LCAV…ISLF), 150 to 170 (GWAV…ALFA), 190 to 210 (LLAI…YWFL), 228 to 248 (VPWL…FEAG), 284 to 304 (PFSA…VHFE), 306 to 326 (LTLA…LVVG), 355 to 375 (MFPA…IASL), and 386 to 406 (ARFG…ILLS).

This sequence belongs to the NhaA Na(+)/H(+) (TC 2.A.33) antiporter family.

The protein localises to the cell membrane. It carries out the reaction Na(+)(in) + 2 H(+)(out) = Na(+)(out) + 2 H(+)(in). In terms of biological role, na(+)/H(+) antiporter that extrudes sodium in exchange for external protons. This is Na(+)/H(+) antiporter NhaA from Bifidobacterium adolescentis (strain ATCC 15703 / DSM 20083 / NCTC 11814 / E194a).